A 160-amino-acid polypeptide reads, in one-letter code: Cytochrome b6-f complex subunit 4 (160 aa).

3 helical membrane passes run 36–56, 95–115, and 131–151; these read LLYTFPVCILGTIGCLVGLAV, LLGVVLMAGVPAGLLTVPFIE, and TVFLIGTVVAVWLGIGATLPI.

Belongs to the cytochrome b family. PetD subfamily. In terms of assembly, the 4 large subunits of the cytochrome b6-f complex are cytochrome b6, subunit IV (17 kDa polypeptide, petD), cytochrome f and the Rieske protein, while the 4 small subunits are petG, petL, petM and petN. The complex functions as a dimer.

The protein localises to the plastid. It localises to the chloroplast thylakoid membrane. Component of the cytochrome b6-f complex, which mediates electron transfer between photosystem II (PSII) and photosystem I (PSI), cyclic electron flow around PSI, and state transitions. This is Cytochrome b6-f complex subunit 4 from Mesostigma viride (Green alga).